The primary structure comprises 39 residues: Cytochrome b559 subunit beta (39 aa).

Residues 14–30 (WLAIHGLAVPTVFFLGS) form a helical membrane-spanning segment. His18 contributes to the heme binding site.

Belongs to the PsbE/PsbF family. As to quaternary structure, heterodimer of an alpha subunit and a beta subunit. PSII is composed of 1 copy each of membrane proteins PsbA, PsbB, PsbC, PsbD, PsbE, PsbF, PsbH, PsbI, PsbJ, PsbK, PsbL, PsbM, PsbT, PsbX, PsbY, PsbZ, Psb30/Ycf12, at least 3 peripheral proteins of the oxygen-evolving complex and a large number of cofactors. It forms dimeric complexes. The cofactor is heme b.

Its subcellular location is the plastid. The protein resides in the chloroplast thylakoid membrane. Functionally, this b-type cytochrome is tightly associated with the reaction center of photosystem II (PSII). PSII is a light-driven water:plastoquinone oxidoreductase that uses light energy to abstract electrons from H(2)O, generating O(2) and a proton gradient subsequently used for ATP formation. It consists of a core antenna complex that captures photons, and an electron transfer chain that converts photonic excitation into a charge separation. The chain is Cytochrome b559 subunit beta from Staurastrum punctulatum (Green alga).